We begin with the raw amino-acid sequence, 155 residues long: SsrA-binding protein (155 aa).

Belongs to the SmpB family.

It localises to the cytoplasm. Required for rescue of stalled ribosomes mediated by trans-translation. Binds to transfer-messenger RNA (tmRNA), required for stable association of tmRNA with ribosomes. tmRNA and SmpB together mimic tRNA shape, replacing the anticodon stem-loop with SmpB. tmRNA is encoded by the ssrA gene; the 2 termini fold to resemble tRNA(Ala) and it encodes a 'tag peptide', a short internal open reading frame. During trans-translation Ala-aminoacylated tmRNA acts like a tRNA, entering the A-site of stalled ribosomes, displacing the stalled mRNA. The ribosome then switches to translate the ORF on the tmRNA; the nascent peptide is terminated with the 'tag peptide' encoded by the tmRNA and targeted for degradation. The ribosome is freed to recommence translation, which seems to be the essential function of trans-translation. This Streptococcus uberis (strain ATCC BAA-854 / 0140J) protein is SsrA-binding protein.